A 402-amino-acid polypeptide reads, in one-letter code: Argininosuccinate synthase (402 aa).

8-16 (AYSGGLDTS) contacts ATP. Tyr-86 and Ser-91 together coordinate L-citrulline. Gly-116 provides a ligand contact to ATP. L-aspartate contacts are provided by Thr-118, Asn-122, and Asp-123. Asn-122 is an L-citrulline binding site. L-citrulline is bound by residues Arg-126, Ser-175, Ser-184, Glu-260, and Tyr-272.

Belongs to the argininosuccinate synthase family. Type 1 subfamily. Homotetramer.

It localises to the cytoplasm. The catalysed reaction is L-citrulline + L-aspartate + ATP = 2-(N(omega)-L-arginino)succinate + AMP + diphosphate + H(+). The protein operates within amino-acid biosynthesis; L-arginine biosynthesis; L-arginine from L-ornithine and carbamoyl phosphate: step 2/3. The protein is Argininosuccinate synthase of Clostridium novyi (strain NT).